The primary structure comprises 396 residues: 1-deoxy-D-xylulose 5-phosphate reductoisomerase (396 aa).

Threonine 13, glycine 14, serine 15, isoleucine 16, and asparagine 127 together coordinate NADPH. Lysine 128 provides a ligand contact to 1-deoxy-D-xylulose 5-phosphate. Glutamate 129 serves as a coordination point for NADPH. Aspartate 153 contributes to the Mn(2+) binding site. 4 residues coordinate 1-deoxy-D-xylulose 5-phosphate: serine 154, glutamate 155, serine 184, and histidine 207. A Mn(2+)-binding site is contributed by glutamate 155. Glycine 213 contacts NADPH. Residues serine 220, asparagine 225, lysine 226, and glutamate 229 each coordinate 1-deoxy-D-xylulose 5-phosphate. Glutamate 229 is a Mn(2+) binding site.

Belongs to the DXR family. It depends on Mg(2+) as a cofactor. Requires Mn(2+) as cofactor.

It carries out the reaction 2-C-methyl-D-erythritol 4-phosphate + NADP(+) = 1-deoxy-D-xylulose 5-phosphate + NADPH + H(+). It participates in isoprenoid biosynthesis; isopentenyl diphosphate biosynthesis via DXP pathway; isopentenyl diphosphate from 1-deoxy-D-xylulose 5-phosphate: step 1/6. Functionally, catalyzes the NADPH-dependent rearrangement and reduction of 1-deoxy-D-xylulose-5-phosphate (DXP) to 2-C-methyl-D-erythritol 4-phosphate (MEP). This chain is 1-deoxy-D-xylulose 5-phosphate reductoisomerase, found in Pseudomonas aeruginosa (strain UCBPP-PA14).